A 3016-amino-acid polypeptide reads, in one-letter code: Genome polyprotein (3016 aa).

Ser-2 carries the N-acetylserine; by host modification. An interaction with STAT1 region spans residues 2–23 (STLPKPQRKTKRNTNRRPMDVK). Residues 2-58 (STLPKPQRKTKRNTNRRPMDVKFPGGGQIVGGVYLLPRRGPRLGVRATRKTSERSQP) form an interaction with EIF2AK2/PKR region. The interaction with DDX3X stretch occupies residues 2–59 (STLPKPQRKTKRNTNRRPMDVKFPGGGQIVGGVYLLPRRGPRLGVRATRKTSERSQPR). A disordered region spans residues 2–75 (STLPKPQRKT…PKARQSQGRH (74 aa)). Over 2 to 168 (STLPKPQRKT…EDGINYATGN (167 aa)) the chain is Cytoplasmic. 2 consecutive short sequence motifs (nuclear localization signal) follow at residues 5-13 (PKPQRKTKR) and 38-43 (PRRGPR). Over residues 7–16 (PQRKTKRNTN) the composition is skewed to basic residues. Low complexity predominate over residues 32–47 (GGVYLLPRRGPRLGVR). Position 53 is a phosphoserine; by host (Ser-53). 2 consecutive short sequence motifs (nuclear localization signal) follow at residues 58-64 (PRGRRQP) and 66-71 (PKARQS). Phosphoserine; by host occurs at positions 99 and 116. The important for endoplasmic reticulum and mitochondrial localization stretch occupies residues 112–152 (PRRRSRNLGKVIDTLTCGFADLMGYIPVVGAPLGGVAAALA). An interaction with APOA2 region spans residues 122-173 (VIDTLTCGFADLMGYIPVVGAPLGGVAAALAHGVRAIEDGINYATGNLPGCS). An important for lipid droplets localization region spans residues 164 to 167 (YATG). A helical membrane pass occupies residues 169-189 (LPGCSFSIFLLALLSCLTTPA). Residues 178–191 (LLALLSCLTTPASA) constitute a propeptide, ER anchor for the core protein, removed in mature form by host signal peptidase. Over 190–358 (SAVHYRNISG…LEGHWGVIGA (169 aa)) the chain is Lumenal. 4 N-linked (GlcNAc...) asparagine; by host glycosylation sites follow: Asn-196, Asn-209, Asn-234, and Asn-250. An important for fusion region spans residues 265-296 (LVGSAAACSALYIGDLCGGVFLVGQLFTFRPR). Residue Asn-305 is glycosylated (N-linked (GlcNAc...) asparagine; by host). A helical transmembrane segment spans residues 359–379 (LLYYSMVANWAKVFAVLLLFA). Residues 380–727 (GVDATTHIGS…WEYIVLAFLV (348 aa)) are Lumenal-facing. The HVR1 stretch occupies residues 385 to 411 (THIGSSASATTNRLTSFFSPGSKQNVQ). 3 N-linked (GlcNAc...) (high mannose) asparagine; by host glycosylation sites follow: Asn-416, Asn-422, and Asn-429. 4 disulfide bridges follow: Cys-428/Cys-552, Cys-451/Cys-458, Cys-486/Cys-494, and Cys-503/Cys-508. Asn-447 is a glycosylation site (N-linked (GlcNAc...) asparagine; by host). An HVR2 region spans residues 474 to 478 (ANISG). Asn-475 carries N-linked (GlcNAc...) asparagine; by host glycosylation. A CD81-binding 1 region spans residues 480–493 (SNDKPYCWHYPPRP). N-linked (GlcNAc...) asparagine; by host glycosylation is present at Asn-532. Positions 544–551 (PPRGSWFG) are CD81-binding 2. Residue Asn-556 is glycosylated (N-linked (GlcNAc...) asparagine; by host). Intrachain disulfides connect Cys-564-Cys-569, Cys-583-Cys-587, Cys-599-Cys-622, and Cys-609-Cys-646. 2 N-linked (GlcNAc...) (high mannose) asparagine; by host glycosylation sites follow: Asn-625 and Asn-647. Cys-654 and Cys-679 form a disulfide bridge. The segment at 662–673 (VEMSPLLFSTTQ) is PKR/eIF2-alpha phosphorylation homology domain (PePHD). A helical transmembrane segment spans residues 728–748 (LAVARVCACLWLMFLVGQAEA). Topologically, residues 749–759 (ALENLIVLNAT) are lumenal. The helical transmembrane segment at 760–780 (SAAGSQGWVWGVVFICAAWYI) threads the bilayer. The Cytoplasmic segment spans residues 781-784 (RGRA). Residues 785–805 (APITTYAILQLWPLLLLVLAL) traverse the membrane as a helical segment. Residues 806–815 (PRRAYAYNGE) lie on the Lumenal side of the membrane. A helical transmembrane segment spans residues 816–836 (EAASLGMLAIVIITIFTLTPA). Topologically, residues 837 to 883 (YKTLLISTLWWIQYYIARAEAMLYVWVPSLQVRGGRDAVILLTCLLH) are cytoplasmic. The chain crosses the membrane as a helical span at residues 884–904 (PQLGFEVTKAILALLGPLYIL). Topologically, residues 905–930 (QYSLLKTPYFVRAHILLRVCMFLRGV) are lumenal. Residues 905 to 1028 (QYSLLKTPYF…DIRDGGWRLL (124 aa)) form the Peptidase C18 domain. The protease NS2-3 stretch occupies residues 906–1208 (YSLLKTPYFV…PVENMQSTAR (303 aa)). The S-palmitoyl cysteine; by host moiety is linked to residue Cys-924. Residues 931-951 (AGGKYVQAALLRLGAWTGTYI) traverse the membrane as a helical segment. Positions 931 to 951 (AGGKYVQAALLRLGAWTGTYI) are interaction with host SCPS1. The Cytoplasmic portion of the chain corresponds to 952–1659 (YDHLTPLSDW…CMSADLEVIT (708 aa)). Active-site for protease NS2 activity; shared with dimeric partner residues include His-954, Glu-974, and Cys-995. Positions 1029 to 1210 (APITAYAQQT…ENMQSTARSP (182 aa)) constitute a Peptidase S29 domain. Active-site charge relay system; for serine protease NS3 activity residues include His-1085 and Asp-1109. Residues Cys-1125 and Cys-1127 each coordinate Zn(2+). Ser-1167 acts as the Charge relay system; for serine protease NS3 activity in catalysis. Positions 1173 and 1177 each coordinate Zn(2+). The region spanning 1219-1371 (PAVPQTYQVG…PNITEVALSS (153 aa)) is the Helicase ATP-binding domain. 1232–1239 (APTGSGKS) is an ATP binding site. The Mg(2+) site is built by Ser-1239 and Glu-1319. A DECH box motif is present at residues 1318–1321 (DECH). Positions 1488–1500 (QRRGRTGRGKHGV) are RNA-binding. A helical transmembrane segment spans residues 1660–1680 (STWVLVGGVLAALAAYCLSVG). The interval 1681 to 1692 (CVVVCGRISTTG) is NS3-binding. The Cytoplasmic portion of the chain corresponds to 1681 to 1807 (CVVVCGRIST…SLTSPLSTST (127 aa)). A helical transmembrane segment spans residues 1808-1828 (TLLLNILGGWVASQLANPTAS). The Lumenal segment spans residues 1829–1830 (TA). Residues 1831-1851 (FVVSGLAGATVGSIGLGRVLV) traverse the membrane as a helical segment. A topological domain (cytoplasmic) is located at residue Asp-1852. A helical membrane pass occupies residues 1853–1873 (IIAGYGAGVSGALVAFKIMSG). The Lumenal portion of the chain corresponds to 1874–1883 (ETPSAEDMVN). Residues 1884–1904 (LLPALLSPGALVVGVVCAAIL) form a helical membrane-spanning segment. Residues 1905 to 1974 (RRHAGPAEGA…WINSDWSTPC (70 aa)) lie on the Cytoplasmic side of the membrane. Cys-1974 carries the S-palmitoyl cysteine; by host lipid modification. Residues 1975–2004 (SGSWLRDIWDWVCTVLSDFKVWLKSKLVPA) lie within the membrane without spanning it. Residues 2005 to 2995 (LPGVPFLSCQ…YHSVSRARPR (991 aa)) lie on the Cytoplasmic side of the membrane. 4 residues coordinate Zn(2+): Cys-2013, Cys-2031, Cys-2033, and Cys-2054. The FKBP8-binding stretch occupies residues 2122–2210 (EFFTEVDGVR…ASSLASQLSA (89 aa)). The tract at residues 2122–2335 (EFFTEVDGVR…PVPPPRRKSV (214 aa)) is transcriptional activation. Residues 2137 to 2141 (PACKP) are interaction with non-structural protein 4A. Residues 2191–2443 (RLARGSPPSC…ALVTPCAAEE (253 aa)) are interaction with host SKP2. Ser-2196, Ser-2199, Ser-2203, Ser-2206, Ser-2209, and Ser-2212 each carry phosphoserine; by host. The tract at residues 2212–2251 (SLKATCTTHCAHPDADLIEANLLWRQEVGGNITRVESENK) is ISDR. Residues 2212–2277 (SLKATCTTHC…REPSVPAECH (66 aa)) are interaction with EIF2AK2/PKR. Positions 2251 to 2309 (KVIVLDSFDPLVPEYDDREPSVPAECHRPNRPKFPPALPIWARPDYNPPLLETWKKPDY) are NS4B-binding. Positions 2302 to 2379 (ETWKKPDYAP…PTTSKSSDQA (78 aa)) are V3. Residues 2325 to 2328 (PPVP) carry the SH3-binding motif. Residues 2330–2338 (PRRKSVVHL) carry the Nuclear localization signal motif. A Glycyl lysine isopeptide (Lys-Gly) (interchain with G-Cter in ubiquitin) cross-link involves residue Lys-2353. Positions 2353 to 2414 (KSFPTQPAST…PDLSSGSWST (62 aa)) are disordered. Over residues 2355–2376 (FPTQPASTPDSDSGHPTTSKSS) the composition is skewed to polar residues. Position 2454 is a phosphoserine; by host (Ser-2454). Residues 2639 to 2757 (PMGFSYDTRC…IAESAGVQED (119 aa)) enclose the RdRp catalytic domain. Residues Asp-2645, Asp-2743, and Asp-2744 each contribute to the Mg(2+) site. A helical transmembrane segment spans residues 2996–3016 (IFLLCLLLLSVGVGIFLLPAR).

It belongs to the hepacivirus polyprotein family. Homooligomer. Interacts with E1 (via C-terminus). Interacts with the non-structural protein 5A. Interacts (via N-terminus) with host STAT1 (via SH2 domain); this interaction results in decreased STAT1 phosphorylation and ubiquitin-mediated proteasome-dependent STAT1 degradation, leading to decreased IFN-stimulated gene transcription. Interacts with host STAT3; this interaction constitutively activates STAT3. Interacts with host LTBR receptor. Interacts with host TNFRSF1A receptor and possibly induces apoptosis. Interacts with host HNRPK. Interacts with host YWHAE. Interacts with host UBE3A/E6AP. Interacts with host DDX3X. Interacts with host APOA2. Interacts with host RXRA protein. Interacts with host SP110 isoform 3/Sp110b; this interaction sequesters the transcriptional corepressor SP110 away from the nucleus. Interacts with host CREB3 nuclear transcription protein; this interaction triggers cell transformation. Interacts with host ACY3. Interacts with host C1QR1. Interacts with host RBM24; this interaction, which enhances the interaction of the mature core protein with 5'-UTR, may inhibit viral translation and favor replication. Interacts with host EIF2AK2/PKR; this interaction induces the autophosphorylation of EIF2AK2. Part of the viral assembly initiation complex composed of NS2, E1, E2, NS3, NS4A, NS5A and the mature core protein. In terms of assembly, forms a heterodimer with envelope glycoprotein E2. Interacts with mature core protein. Interacts with protease NS2. The heterodimer E1/E2 interacts with host CLDN1; this interaction plays a role in viral entry into host cell. Interacts with host SPSB2 (via C-terminus). Part of the viral assembly initiation complex composed of NS2, E1, E2, NS3, NS4A, NS5A and the mature core protein. Interacts with host NEURL3; this interaction prevents E1 binding to glycoprotein E2. As to quaternary structure, forms a heterodimer with envelope glycoprotein E1. Interacts with host CD81 and SCARB1 receptors; these interactions play a role in viral entry into host cell. Interacts with host EIF2AK2/PKR; this interaction inhibits EIF2AK2 and probably allows the virus to evade the innate immune response. Interacts with host CD209/DC-SIGN and CLEC4M/DC-SIGNR. Interact with host SPCS1; this interaction is essential for viral particle assembly. Interacts with protease NS2. The heterodimer E1/E2 interacts with host CLDN1; this interaction plays a role in viral entry into host cell. Part of the viral assembly initiation complex composed of NS2, E1, E2, NS3, NS4A, NS5A and the mature core protein. Interacts with host SLC3A2/4F2hc; the interaction may facilitate viral entry into host cell. Interacts with human PLSCR1. Homohexamer. Homoheptamer. Interacts with protease NS2. In terms of assembly, homodimer. Interacts with host SPCS1; this interaction is essential for viral particle assembly. Interacts with envelope glycoprotein E1. Interacts with envelope glycoprotein E2. Interacts with viroporin p7. Interacts with serine protease/helicase NS3. Part of the replication complex composed of NS2, NS3, NS4A, NS4B, NS5A and the RNA-directed RNA polymerase embedded in an ER-derived membranous web. Part of the viral assembly initiation complex composed of NS2, E1, E2, NS3, NS4A, NS5A and the mature core protein. As to quaternary structure, interacts with protease NS2. Interacts with non-structural protein 4A; this interaction stabilizes the folding of NS3 serine protease. NS3-NS4A interaction is essential for NS3 activation and allows membrane anchorage of the latter. NS3/NS4A complex also prevents phosphorylation of host IRF3, thus preventing the establishment of dsRNA induced antiviral state. Interacts with host MAVS; this interaction leads to the cleavage and inhibition of host MAVS. Interacts with host TICAM1; this interaction leads to the cleavage and inhibition of host TICAM1. Interacts with host TANK-binding kinase/TBK1; this interaction results in the inhibition of the association between TBK1 and IRF3, which leads to the inhibition of IRF3 activation. Interacts with host RBM24. Part of the replication complex composed of NS2, NS3, NS4A, NS4B, NS5A and the RNA-directed RNA polymerase embedded in an ER-derived membranous web. Part of the viral assembly initiation complex composed of NS2, E1, E2, NS3, NS4A, NS5A and the mature core protein. Interacts with NS3 serine protease; this interaction stabilizes the folding of NS3 serine protease. NS3-NS4A interaction is essential for NS3 activation and allows membrane anchorage of the latter. Interacts with non-structural protein 5A (via N-terminus). Part of the replication complex composed of NS2, NS3, NS4A, NS4B, NS5A and the RNA-directed RNA polymerase embedded in an ER-derived membranous web. Part of the viral assembly initiation complex composed of NS2, E1, E2, NS3, NS4A, NS5A and the mature core protein. In terms of assembly, homomultimer. Interacts with non-structural protein NS5A. Interacts with host PLA2G4C; this interaction likely initiates the recruitment of replication complexes to lipid droplets. Interacts with host STING; this interaction disrupts the interaction between STING and TBK1 thereby suppressing the interferon signaling. Part of the replication complex composed of NS2, NS3, NS4A, NS4B, NS5A and the RNA-directed RNA polymerase embedded in an ER-derived membranous web. As to quaternary structure, monomer. Homodimer; dimerization is required for RNA-binding. Interacts with the mature core protein. Interacts (via N-terminus) with non-structural protein 4A. Interacts with non-structural protein 4B. Interacts (via region D2) with RNA-directed RNA polymerase. Part of the viral assembly initiation complex composed of NS2, E1, E2, NS3, NS4A, NS5A and the mature core protein. Part of the replication complex composed of NS2, NS3, NS4A, NS4B, NS5A and the RNA-directed RNA polymerase embedded in an ER-derived membranous web. Interacts with host GRB2. Interacts with host BIN1. Interacts with host PIK3R1. Interacts with host SRCAP. Interacts with host FKBP8. Interacts (via C-terminus) with host VAPB (via MSP domain). Interacts with host EIF2AK2/PKR; this interaction leads to disruption of EIF2AK2 dimerization by NS5A and probably allows the virus to evade the innate immune response. Interacts (via N-terminus) with host PACSIN2 (via N-terminus); this interaction attenuates protein kinase C alpha-mediated phosphorylation of PACSIN2 by disrupting the interaction between PACSIN2 and PRKCA. Interacts (via N-terminus) with host SRC kinase (via SH2 domain). Interacts with most Src-family kinases. Interacts with host IFI27 and SKP2; promotes the ubiquitin-mediated proteasomal degradation of NS5A. Interacts with host GPS2. Interacts with host TNFRSF21; this interaction allows the modulation by the virus of JNK, p38 MAPK, STAT3, and Akt signaling pathways in a DR6-dependent manner. Interacts (via N-terminus) with host CIDEB (via N-terminus); this interaction seems to regulate the association of HCV particles with APOE. Interacts with host CHKA/Choline Kinase-alpha; CHKA bridges host PI4KA and NS5A and potentiates NS5A-stimulated PI4KA activity, which then facilitates the targeting of the ternary complex to the ER for viral replication. Interacts with host SPSB2 (via C-terminus); this interaction targets NS5A for ubiquitination and degradation. Interacts with host RAB18; this interaction may promote the association of NS5A and other replicase components with lipid droplets. Interacts (via region D2) with host PPIA/CYPA; the interaction stimulates RNA-binding ability of NS5A and is dependent on the peptidyl-prolyl cis-trans isomerase activity of PPIA/CYPA. Interacts with host TRIM14; this interaction induces the degradation of NS5A. Homooligomer. Interacts with non-structural protein 5A. Interacts with host VAPB. Interacts with host PRK2/PKN2. Interacts with host HNRNPA1 and SEPT6; these interactions facilitate viral replication. Part of the replication complex composed of NS2, NS3, NS4A, NS4B, NS5A and the RNA-directed RNA polymerase. Zn(2+) serves as cofactor. The cofactor is Mg(2+). In terms of processing, specific enzymatic cleavages in vivo yield mature proteins. The structural proteins, core, E1, E2 and p7 are produced by proteolytic processing by host signal peptidases. The core protein precursor is synthesized as a 23 kDa, which is retained in the ER membrane through the hydrophobic signal peptide. Cleavage by the signal peptidase releases the 21 kDa mature core protein. The cleavage of the core protein precursor occurs between aminoacids 176 and 188 but the exact cleavage site is not known. Some degraded forms of the core protein appear as well during the course of infection. The other proteins (p7, NS2, NS3, NS4A, NS4B, NS5A and NS5B) are cleaved by the viral proteases. Autoprocessing between NS2 and NS3 is mediated by the NS2 cysteine protease catalytic domain and regulated by the NS3 N-terminal domain. Post-translationally, phosphorylated by host PKC and PKA. Ubiquitinated; mediated by UBE3A and leading to core protein subsequent proteasomal degradation. In terms of processing, highly N-glycosylated. Post-translationally, palmitoylation is required for NS2/3 autoprocessing and E2 recruitment to membranes. Palmitoylated. This modification may play a role in its polymerization or in protein-protein interactions. In terms of processing, phosphorylated on serines in a basal form termed p56. p58 is a hyperphosphorylated form of p56. p56 and p58 coexist in the cell in roughly equivalent amounts. Hyperphosphorylation is dependent on the presence of NS4A. Host CSNK1A1/CKI-alpha or RPS6KB1 kinases may be responsible for NS5A phosphorylation. Post-translationally, tyrosine phosphorylation is essential for the interaction with host SRC. Ubiquitinated. Ubiquitination, most probably at Lys-2353, mediated by host IFI27 and SKP2 leads to proteasomal degradation, restricting viral infection. Ubiquitination by host TRIM22 leads to interruption of viral replication. In terms of processing, the N-terminus is phosphorylated by host PRK2/PKN2.

The protein localises to the host endoplasmic reticulum membrane. It is found in the host mitochondrion membrane. Its subcellular location is the virion. It localises to the host cytoplasm. The protein resides in the host nucleus. The protein localises to the host lipid droplet. It is found in the virion membrane. Its subcellular location is the host mitochondrion. It localises to the host cell membrane. The protein resides in the host perinuclear region. It catalyses the reaction Hydrolysis of four peptide bonds in the viral precursor polyprotein, commonly with Asp or Glu in the P6 position, Cys or Thr in P1 and Ser or Ala in P1'.. It carries out the reaction a ribonucleoside 5'-triphosphate + H2O = a ribonucleoside 5'-diphosphate + phosphate + H(+). The catalysed reaction is ATP + H2O = ADP + phosphate + H(+). The enzyme catalyses RNA(n) + a ribonucleoside 5'-triphosphate = RNA(n+1) + diphosphate. Inhibited by the antiviral drug hexamethylene amiloride. Inhibition by amantadine appears to be genotype-dependent. Also inhibited by long-alkyl-chain iminosugar derivatives. With respect to regulation, activity is up-regulated by PRK2/PKN2-mediated phosphorylation. Packages viral RNA to form a viral nucleocapsid, and promotes virion budding. Participates in the viral particle production as a result of its interaction with the non-structural protein 5A. Binds RNA and may function as a RNA chaperone to induce the RNA structural rearrangements taking place during virus replication. Modulates viral translation initiation by interacting with viral IRES and 40S ribosomal subunit. Affects various cell signaling pathways, host immunity and lipid metabolism. Prevents the establishment of cellular antiviral state by blocking the interferon-alpha/beta (IFN-alpha/beta) and IFN-gamma signaling pathways and by blocking the formation of phosphorylated STAT1 and promoting ubiquitin-mediated proteasome-dependent degradation of STAT1. Activates STAT3 leading to cellular transformation. Regulates the activity of cellular genes, including c-myc and c-fos. May repress the promoter of p53, and sequester CREB3 and SP110 isoform 3/Sp110b in the cytoplasm. Represses cell cycle negative regulating factor CDKN1A, thereby interrupting an important check point of normal cell cycle regulation. Targets transcription factors involved in the regulation of inflammatory responses and in the immune response: suppresses TNF-induced NF-kappa-B activation, and activates AP-1. Binds to dendritic cells (DCs) via C1QR1, resulting in down-regulation of T-lymphocytes proliferation. Alters lipid metabolism by interacting with hepatocellular proteins involved in lipid accumulation and storage. Induces up-regulation of FAS promoter activity, and thereby contributes to the increased triglyceride accumulation in hepatocytes (steatosis). In terms of biological role, forms a heterodimer with envelope glycoprotein E2, which mediates virus attachment to the host cell, virion internalization through clathrin-dependent endocytosis and fusion with host membrane. Fusion with the host cell is most likely mediated by both E1 and E2, through conformational rearrangements of the heterodimer required for fusion rather than a classical class II fusion mechanism. E1/E2 heterodimer binds host apolipoproteins such as APOB and ApoE thereby forming a lipo-viro-particle (LVP). APOE associated to the LVP allows the initial virus attachment to cell surface receptors such as the heparan sulfate proteoglycans (HSPGs), syndecan-1 (SDC1), syndecan-1 (SDC2), the low-density lipoprotein receptor (LDLR) and scavenger receptor class B type I (SCARB1). The cholesterol transfer activity of SCARB1 allows E2 exposure and binding of E2 to SCARB1 and the tetraspanin CD81. E1/E2 heterodimer binding on CD81 activates the epithelial growth factor receptor (EGFR) signaling pathway. Diffusion of the complex E1-E2-EGFR-SCARB1-CD81 to the cell lateral membrane allows further interaction with Claudin 1 (CLDN1) and occludin (OCLN) to finally trigger HCV entry. Its function is as follows. Forms a heterodimer with envelope glycoprotein E1, which mediates virus attachment to the host cell, virion internalization through clathrin-dependent endocytosis and fusion with host membrane. Fusion with the host cell is most likely mediated by both E1 and E2, through conformational rearrangements of the heterodimer required for fusion rather than a classical class II fusion mechanism. The interaction between envelope glycoprotein E2 and host apolipoprotein E/APOE allows the proper assembly, maturation and infectivity of the viral particles. This interaction is probably promoted via the up-regulation of cellular autophagy by the virus. E1/E2 heterodimer binds host apolipoproteins such as APOB and APOE thereby forming a lipo-viro-particle (LVP). APOE associated to the LVP allows the initial virus attachment to cell surface receptors such as the heparan sulfate proteoglycans (HSPGs), syndecan-1 (SDC1), syndecan-1 (SDC2), the low-density lipoprotein receptor (LDLR) and scavenger receptor class B type I (SCARB1). The cholesterol transfer activity of SCARB1 allows E2 exposure and binding of E2 to SCARB1 and the tetraspanin CD81. E1/E2 heterodimer binding on CD81 activates the epithelial growth factor receptor (EGFR) signaling pathway. Diffusion of the complex E1-E2-EGFR-SCARB1-CD81 to the cell lateral membrane allows further interaction with Claudin 1 (CLDN1) and occludin (OCLN) to finally trigger HCV entry. Inhibits host EIF2AK2/PKR activation, preventing the establishment of an antiviral state. Viral ligand for CD209/DC-SIGN and CLEC4M/DC-SIGNR, which are respectively found on dendritic cells (DCs), and on liver sinusoidal endothelial cells and macrophage-like cells of lymph node sinuses. These interactions allow the capture of circulating HCV particles by these cells and subsequent facilitated transmission to permissive cells such as hepatocytes and lymphocyte subpopulations. The interaction between E2 and host amino acid transporter complex formed by SLC3A2 and SLC7A5/LAT1 may facilitate viral entry into host cell. Functionally, ion channel protein that acts as a viroporin and plays an essential role in the assembly, envelopment and secretion of viral particles. Regulates the host cell secretory pathway, which induces the intracellular retention of viral glycoproteins and favors assembly of viral particles. Creates a pore in acidic organelles and releases Ca(2+) and H(+) in the cytoplasm of infected cells, leading to a productive viral infection. High levels of cytoplasmic Ca(2+) may trigger membrane trafficking and transport of viral ER-associated proteins to viroplasms, sites of viral genome replication. This ionic imbalance induces the assembly of the inflammasome complex, which triggers the maturation of pro-IL-1beta into IL-1beta through the action of caspase-1. Targets also host mitochondria and induces mitochondrial depolarization. In addition of its role as a viroporin, acts as a lipid raft adhesion factor. Cysteine protease required for the proteolytic auto-cleavage between the non-structural proteins NS2 and NS3. The N-terminus of NS3 is required for the function of NS2 protease (active region NS2-3). Promotes the initiation of viral particle assembly by mediating the interaction between structural and non-structural proteins. In terms of biological role, displays three enzymatic activities: serine protease with a chymotrypsin-like fold, NTPase and RNA helicase. NS3 serine protease, in association with NS4A, is responsible for the cleavages of NS3-NS4A, NS4A-NS4B, NS4B-NS5A and NS5A-NS5B. The NS3/NS4A complex prevents phosphorylation of host IRF3, thus preventing the establishment of dsRNA induced antiviral state. The NS3/NS4A complex induces host amino acid transporter component SLC3A2, thus contributing to HCV propagation. NS3 RNA helicase binds to RNA and unwinds both dsDNA and dsRNA in the 3' to 5' direction, and likely resolves RNA complicated stable secondary structures in the template strand. Binds a single ATP and catalyzes the unzipping of a single base pair of dsRNA. Inhibits host antiviral proteins TBK1 and IRF3 thereby preventing the establishment of an antiviral state. Cleaves host MAVS/CARDIF thereby preventing the establishment of an antiviral state. Cleaves host TICAM1/TRIF, thereby disrupting TLR3 signaling and preventing the establishment of an antiviral state. Its function is as follows. Peptide cofactor which forms a non-covalent complex with the N-terminal of NS3 serine protease. The NS3/NS4A complex prevents phosphorylation of host IRF3, thus preventing the establishment of dsRNA induced antiviral state. The NS3/NS4A complex induces host amino acid transporter component SLC3A2, thus contributing to HCV propagation. Functionally, induces a specific membrane alteration that serves as a scaffold for the virus replication complex. This membrane alteration gives rise to the so-called ER-derived membranous web that contains the replication complex. NS4B self-interaction contributes to its function in membranous web formation. Promotes host TRIF protein degradation in a CASP8-dependent manner thereby inhibiting host TLR3-mediated interferon signaling. Disrupts the interaction between STING and TBK1 contributing to the inhibition of interferon signaling. Phosphorylated protein that is indispensable for viral replication and assembly. Both hypo- and hyperphosphorylated states are required for the viral life cycle. The hyperphosphorylated form of NS5A is an inhibitor of viral replication. Involved in RNA-binding and especially in binding to the viral genome. Zinc is essential for RNA-binding. Participates in the viral particle production as a result of its interaction with the mature viral core protein. Its interaction with host VAPB may target the viral replication complex to vesicles. Down-regulates viral IRES translation initiation. Mediates interferon resistance, presumably by interacting with and inhibiting host EIF2AK2/PKR. Prevents BIN1-induced apoptosis. Acts as a transcriptional activator of some host genes important for viral replication when localized in the nucleus. Via the interaction with host PACSIN2, modulates lipid droplet formation in order to promote virion assembly. Modulates TNFRSF21/DR6 signaling pathway for viral propagation. In terms of biological role, RNA-dependent RNA polymerase that performs primer-template recognition and RNA synthesis during viral replication. Initiates RNA transcription/replication at a flavin adenine dinucleotide (FAD), resulting in a 5'- FAD cap on viral RNAs. In this way, recognition of viral 5' RNA by host pattern recognition receptors can be bypassed, thereby evading activation of antiviral pathways. This Hepatitis C virus genotype 6k (isolate VN405) (HCV) protein is Genome polyprotein.